Here is a 294-residue protein sequence, read N- to C-terminus: Fructose-bisphosphate aldolase class 1 (294 aa).

Glutamate 176 (proton acceptor) is an active-site residue. Lysine 213 (schiff-base intermediate with dihydroxyacetone-P) is an active-site residue.

The protein belongs to the class I fructose-bisphosphate aldolase family.

It catalyses the reaction beta-D-fructose 1,6-bisphosphate = D-glyceraldehyde 3-phosphate + dihydroxyacetone phosphate. It participates in carbohydrate degradation; glycolysis; D-glyceraldehyde 3-phosphate and glycerone phosphate from D-glucose: step 4/4. In Oceanobacillus iheyensis (strain DSM 14371 / CIP 107618 / JCM 11309 / KCTC 3954 / HTE831), this protein is Fructose-bisphosphate aldolase class 1.